The sequence spans 176 residues: NAD(P)H-quinone oxidoreductase subunit 6, chloroplastic (176 aa).

The next 5 helical transmembrane spans lie at 10-30 (ILML…VLLT), 33-53 (IYSA…YFLL), 60-80 (VAQL…AVMF), 95-115 (IGDG…MTTI), and 152-172 (FYLP…GAIT).

The protein belongs to the complex I subunit 6 family. NDH is composed of at least 16 different subunits, 5 of which are encoded in the nucleus.

The protein localises to the plastid. Its subcellular location is the chloroplast thylakoid membrane. The enzyme catalyses a plastoquinone + NADH + (n+1) H(+)(in) = a plastoquinol + NAD(+) + n H(+)(out). The catalysed reaction is a plastoquinone + NADPH + (n+1) H(+)(in) = a plastoquinol + NADP(+) + n H(+)(out). NDH shuttles electrons from NAD(P)H:plastoquinone, via FMN and iron-sulfur (Fe-S) centers, to quinones in the photosynthetic chain and possibly in a chloroplast respiratory chain. The immediate electron acceptor for the enzyme in this species is believed to be plastoquinone. Couples the redox reaction to proton translocation, and thus conserves the redox energy in a proton gradient. The sequence is that of NAD(P)H-quinone oxidoreductase subunit 6, chloroplastic (ndhG) from Hordeum vulgare (Barley).